We begin with the raw amino-acid sequence, 256 residues long: Small ribosomal subunit protein uS2 (256 aa).

Belongs to the universal ribosomal protein uS2 family.

The sequence is that of Small ribosomal subunit protein uS2 from Ruegeria sp. (strain TM1040) (Silicibacter sp.).